The following is a 238-amino-acid chain: MGEPIYRRVVVKLSGEYFAGPQHYGIDQPTIDRVAGDLIAARGLGVEIAVVVGGGNIFRGVEVSARGVSRPTGDTMGMLATVMNCLALGEALRRHGQPARTFSALLMPEVCDLYTRAAAQQTLAEGGIALLAGGTGNPFFTTDTTAVLRAAEIDAGAVLKATNVDGVYTADPKRDPNAKRFERLTHSEALAGGYKVMDATAFALARETSLPIIVFSIAEPGSIGAVLGGAGRATVVAG.

12–15 (KLSG) provides a ligand contact to ATP. Gly-54 contacts UMP. ATP is bound by residues Gly-55 and Arg-59. Residues Asp-74 and 135–142 (TGNPFFTT) contribute to the UMP site. ATP is bound by residues Thr-162, Asn-163, Tyr-168, and Asp-171.

Belongs to the UMP kinase family. As to quaternary structure, homohexamer.

It localises to the cytoplasm. The enzyme catalyses UMP + ATP = UDP + ADP. Its pathway is pyrimidine metabolism; CTP biosynthesis via de novo pathway; UDP from UMP (UMPK route): step 1/1. Its activity is regulated as follows. Inhibited by UTP. Its function is as follows. Catalyzes the reversible phosphorylation of UMP to UDP. The sequence is that of Uridylate kinase from Rhodopseudomonas palustris (strain HaA2).